We begin with the raw amino-acid sequence, 1122 residues long: MLQQKFPAAAKSFFAIDNFTKNLKQDFILSASNEEEALQLYKQALFFSSNENIYYFPSYNTIPYDHTSPNANILSRRAETLIKLTTNNSNSNKLLITHTANLLNKLPPKDFFSKYFLKLSPKMKFTTDELAMFLVENSFTRNASSIDVGEFAVRGEIIDIILSGPKAYRIHFSWGYIESIKEFDIDTQISTKSCRELIISPANEIVLNSETIGNFKNNYLRNFGVNHTDNALYEAVISGRKFTGYEQLLPLFYDSCSNLIDYLNDPIFIFDNLSKKAILEFEHSYNDFYSARSEANKLKFNSFYPTLSPTSLYFTASEITELLEQKNNILLTFENSEQASLIKNIAATSFIEKKTVFDKLFEVIKANSHKKIIIGSSVLSSFERIKSIIQNYEYKYNEINKLDEAKASIINVAIIPLNQSFYTKEYLFITASELLEEKPSSTNTNKKLKNILLELDNLAEGEFVVHKDHGIGQFLKLEALEIKGKPHDFLKILYAGNDKLYIPVESIEVIKKYGNDNAELDKLGSVSWQRSKAKLKKRIKEIALHLIQIAAKRKLNSSASVEFDLEEYDKFCANFPFSETEDQLIAINDIKEDLRNGMLMDRLICGDVGFGKTEVAMRAVFMVAKSLNEHLPQVAVVVPTTILCSQHFSRFIERFKGFGLNIKQLSSVISSKEAKIIRSELESGKINIIIGTHSLLHKNIKFFNLKLLIIDEEQHFGVGQKEFLKSLKSSSHVLAMSATPIPRTLQMSMTGLKELSIIATPPLNRLEVHTSVMPYDPVIIRDALLREHFRGGRSFYVVPRIKDIEDIAKQLKQIVPELSYKIAYGKMTPSKIDEVMSEFYAGKFDILVSTTIIESGIDIAEANTMIIHNADMLGLSQLYQLRGRIGRGKMRGYAYLTVASHKKMTSHSLRRLEIIQNSCALGSGFTIASRDMDLRGFGNLIGEEQSGQIKEVGTELYQEMLEEQIAIFKDESIVSEQPFIPTINLGLSVFIPDNYVADAALKLGLYRRIGNLSNEIEVETFKDEMIDRFGLLPIEFNNLLDIVKIKLLCFKLNIENLDSGDNGFVIKFYKNADMTDKILKFVTTYSNQAKIKPDNKLVYIKKLVDKNIIVEANQLLWNLSEV.

The 166-residue stretch at 593-758 (DLRNGMLMDR…MTGLKELSII (166 aa)) folds into the Helicase ATP-binding domain. 606-613 (GDVGFGKT) is a binding site for ATP. Residues 711-714 (DEEQ) carry the DEEQ box motif. The Helicase C-terminal domain maps to 779 to 933 (IIRDALLREH…GFTIASRDMD (155 aa)).

The protein in the N-terminal section; belongs to the UvrB family. This sequence in the C-terminal section; belongs to the helicase family. RecG subfamily.

Its subcellular location is the cytoplasm. Its function is as follows. Couples transcription and DNA repair by recognizing RNA polymerase (RNAP) stalled at DNA lesions. Mediates ATP-dependent release of RNAP and its truncated transcript from the DNA, and recruitment of nucleotide excision repair machinery to the damaged site. The chain is Transcription-repair-coupling factor from Rickettsia conorii (strain ATCC VR-613 / Malish 7).